Reading from the N-terminus, the 121-residue chain is MSFYESVFIIRQDISLNDIDKIVDDFAKIIKDNNGTIIKKEYWGLRTLAYKIGSNKKGHYYFLGLDITPNVKEEIERKMKLNENIIRFLTIKADAISSEPSPMLKNQSTENNLVIDVTINN.

This sequence belongs to the bacterial ribosomal protein bS6 family.

In terms of biological role, binds together with bS18 to 16S ribosomal RNA. This Rickettsia canadensis (strain McKiel) protein is Small ribosomal subunit protein bS6.